The following is a 1564-amino-acid chain: MSNKEVKAILKNARDAIRNKDYKEVLKQCKAVLKLEKNNYNAWVFIGLAASELEQPDQAQAAYRKAVEIEPDQLLAWQGLGNLYEKVNQKDFKEDLPNVYQKLLELYRSSDKQKWYEICKKLSDLYQQEKNYVPAAHTWHQLIKMKEDESIKSNELYPLWKRMTELLSEDVEKLDNETQELLLNAFESAIPCIEEIPSEEHQMLYQHYITCLSKLPLEEAKLKKVCENMITVYPSLIYPLKVLALHYIKSGDITEEAICCYSKLLELDPLNGPGLIGMGIKALHDRNYVLASENLSKGLKDVNCCPSAWCCLAQAQLKIHKYAEALVSCDQAINGATQDNSAPQSVVQKDAAFRLKAEALVEGNSSNNAEEALKALEQISNADNNPEICAIKGQAYLKKGCIDVASKISEELRLSHEHLAEGHFLEGLLQYIQKNYSAAEISLQYALERKPENAVYHYYLGLNYWFMSKETRRDKTKAVTQFLKAAKMDPFMSRAFYYLGHYYSEVAGDKSRARGCYKKAFELDDSDGEAGAAAVDLSMELGDMDVALAILTSVTERADAGTAKWAWLRRGLFYLRVGQHSKSVSDLHAALRADPKDSNCWECLGEAYLSRGGYTTALKSFMKASELNPDSIYSVYKIASIKQILGTYKEAVNEYQQILMKSGEYVPALKGLGECHLMLAKSALSDFLDLKAVDAIEKAIEFLARAIRLRPDLLCLWKLLGDACTCIYAVTHSSVKVNVLGILLGNDEEQQLLNKPEVLALGGRCYGRALRIQSTANLWCDLGINYYYQSQHLMGYDSLTNDASELLEKSQQCIKKAVMVESGNHQFWNALGVVSCSKGMGNNALAQHAFIKSIHCEQNNVAAWTNLGALYLMNGNIELSHQAFKVAQSLDPLYVRCWIGQALIAETVGSHETMDLFRHTTELSMHVEGAKGYAHWVCTTLQDKNNRNTALYRYNIVQMNAITAAHLALSKYTERIQNDRTAFEMLGYLNEHLNLKKQASESYRRVVSILQEREDKESSNSALQHYGRSLCAVGQYQEAIQTFSSTPLTEFDDLTGIALAFFKKGLLQESMKAYKQALSVAKSDQEKAHILTALAIIEYNRGEFDTAKTLLFKCSVLKEPSIESLQSLCALGLAKRDVTLATAALNELLKHVKIKDNIYERCLITSAIYVLQGRNEAAQRQACRDIHSHPGNPELWAFLSRLVPQHVPRDAKGGAVAGTVAYTLNINHSKKALLYAAVNELSAGALLADDRKKNALNTLQRAAHFFPDNPAVWASLMAACEAENTASYLNKKSNKKTDLSLTFLASVKSKTEGMKAVPASYTQTLRSWSLCQAICALKDQGRISEAEALCTKSIQNCPDQTPFFLLLRQIQCKQLQSQAQISEPVLEELKKTVLSNFTSHNAWHWLAEVYQSLGMMMDAEMCYRKSLQLASQQGNWNGKLSSLLRLALLALKVCMAKIPDSRWPGLLQEATSEVLKMTFCPLAVLLQGILQFSTKGSRKTRQLLEKVVYQSGCSDTIAFVARWYLLRHLHGKNDDQLVEVLLDNAKAHGDTRIIDLHKQLTESS.

TPR repeat units follow at residues 6–39 (VKAILKNARDAIRNKDYKEVLKQCKAVLKLEKNN), 40–73 (YNAWVFIGLAASELEQPDQAQAAYRKAVEIEPDQ), 75–110 (LAWQGLGNLYEKVNQKDFKEDLPNVYQKLLELYRSS), 116–149 (YEICKKLSDLYQQEKNYVPAAHTWHQLIKMKEDE), 237–271 (IYPLKVLALHYIKSGDITEEAICCYSKLLELDPLN), 306–339 (PSAWCCLAQAQLKIHKYAEALVSCDQAINGATQD), 420–453 (AEGHFLEGLLQYIQKNYSAAEISLQYALERKPEN), 456–492 (YHYYLGLNYWFMSKETRRDKTKAVTQFLKAAKMDPFM), 493–527 (SRAFYYLGHYYSEVAGDKSRARGCYKKAFELDDSD), 564–597 (KWAWLRRGLFYLRVGQHSKSVSDLHAALRADPKD), 598–631 (SNCWECLGEAYLSRGGYTTALKSFMKASELNPDS), 633–665 (YSVYKIASIKQILGTYKEAVNEYQQILMKSGEY), 678–713 (MLAKSALSDFLDLKAVDAIEKAIEFLARAIRLRPDL), 743–776 (LLGNDEEQQLLNKPEVLALGGRCYGRALRIQSTA), 861–894 (VAAWTNLGALYLMNGNIELSHQAFKVAQSLDPLY), 980–1013 (RTAFEMLGYLNEHLNLKKQASESYRRVVSILQER), 1020–1050 (NSALQHYGRSLCAVGQYQEAIQTFSSTPLTE), 1051–1084 (FDDLTGIALAFFKKGLLQESMKAYKQALSVAKSD), and 1400–1433 (HNAWHWLAEVYQSLGMMMDAEMCYRKSLQLASQQ).

The polypeptide is Tetratricopeptide repeat protein 37 (ttc37) (Xenopus laevis (African clawed frog)).